A 983-amino-acid polypeptide reads, in one-letter code: MSVPTKRRLSFDESTNKRFLNGTHSTENNTSNIEVDEDYGSDGSEQIFDLPATTNNNQWQETITKVVNAVVSIQFTHVSNFDTETSLVSEATGFVVDATRGLILTNRHVVGPGPFCGYVVFDNHEEAVVKPIYRDPVHDFGFLQFDPKEVKYLQLTQLELKPDLAKVGTEIRVVGNDAGEKLSILAGFISRLDRNAPEYGSLTYNDFNTEYIQAAASASGGSSGSPVVNEDGDVVALQAGGSTEASTDFFLPIYRPLRALQCIQKKQPITRGDIQVEWQLKPYDECRRLGLTPEAEARARKLFPNKIGLLVAELVLPQGQADGLIKEGDTLISIDDIDISTFIKVDEILDENVGNELKFVIQRGGEVITQMIKIGDLHSITPDRYVDVGGASFNNLSYQVARCYCIPVKGVFINDASGSFEFASYEKSGWLLETVDDMPTPDLDTLIEVMKMIPDCRRVPITYRHVSDLHTENIQIIYIERHWQSSFRLAVRNDTTGLWDFTDLQEKPLPPLSHEPQNAKFIDIPFSDETRSGCSSLVRSFVQVRLIAPVPMDSYPYRKEICYGVVVDSVNGYVLVSRRFVPHDMCDIFLIFAESIDVPAKVVFLHPNQNYAILKYDPSLVLADVKTPKFGDKPLKRGEKSYFIGYNYNLRLVTDDVKISGVSSLNIPPASLSPRYRGTNLECILLDSKISVECDSGVLADDDGTVRAFWITYLGEATCDQGSDRMYRMGLDVTDVLSVIEKLKVNEIPKQLRLLEAEFTSVTILQGRTRGVSQEWINKFEEVCEDEIKFLAVERVSAPTLHQEKNPLKAGDIILSVNDIIVKNMRDLKPMFTEQELKFRIIRQKKETEIVVPTIDTTTINTSHVVFWSGAIIQAPHYAVRQLMERVPSEVYVTRKSAGGPAHQYGIATNSFITHVNDVETKDLVSLMKVVKDIPDNTYIKLRLMSFDNVPIAISLKTNYHYFPTSELKKKEGSDEWIEIEHK.

Residues 1–40 (MSVPTKRRLSFDESTNKRFLNGTHSTENNTSNIEVDEDYG) form a disordered region. A compositionally biased stretch (polar residues) spans 22–33 (GTHSTENNTSNI). The tract at residues 59–260 (WQETITKVVN…LPIYRPLRAL (202 aa)) is serine protease. Catalysis depends on charge relay system residues His-108, Asp-139, and Ser-222. PDZ domains lie at 287–365 (RRLG…QRGG) and 867–948 (FWSG…MSFD).

The protein belongs to the peptidase S1C family.

The protein localises to the nucleus. In terms of biological role, nuclear serine protease which mediates apoptosis. The sequence is that of Pro-apoptotic serine protease NMA111 (NMA111) from Scheffersomyces stipitis (strain ATCC 58785 / CBS 6054 / NBRC 10063 / NRRL Y-11545) (Yeast).